The following is a 220-amino-acid chain: UPF0319 protein CKO_02102 (220 aa).

Residues 1–20 form the signal peptide; it reads MKTGIITMLFVLYLPVTAFA.

This sequence belongs to the UPF0319 family.

The polypeptide is UPF0319 protein CKO_02102 (Citrobacter koseri (strain ATCC BAA-895 / CDC 4225-83 / SGSC4696)).